The chain runs to 439 residues: Acyl-lipid (8-3)-desaturase (439 aa).

In terms of domain architecture, Cytochrome b5 heme-binding spans 7–88 (GRSAAREMTA…LPKLDASKVE (82 aa)). His40 and His66 together coordinate heme. The helical transmembrane segment at 123 to 143 (IPHMIYRVVEIVALFALSFWL) threads the bilayer. The Histidine box-1 signature appears at 171–175 (HEMGH). The short motif at 208–213 (HSKHHA) is the Histidine box-2 element. 3 consecutive transmembrane segments (helical) span residues 254-274 (AYLF…LYLH), 287-307 (FVWI…LGYS), and 312-332 (VGMY…QFAV). The Histidine box-3 motif lies at 376–380 (QIEHH).

Belongs to the fatty acid desaturase type 1 family. The cofactor is Fe(2+).

The protein resides in the membrane. The enzyme catalyses an (8Z,11Z,14Z)-icosatrienoyl-containing glycerolipid + 2 Fe(II)-[cytochrome b5] + O2 + 2 H(+) = (5Z,8Z,11Z,14Z)-eicosatetraenoyl-containing glycerolipid + 2 Fe(III)-[cytochrome b5] + 2 H2O. It carries out the reaction an (8Z,11Z,14Z,17Z)-eicosatetraenoyl-containing glycerolipid + 2 Fe(II)-[cytochrome b5] + O2 + 2 H(+) = a (5Z,8Z,11Z,14Z,17Z)-eicosapentaenoyl-containing glycerolipid + 2 Fe(III)-[cytochrome b5] + 2 H2O. In terms of biological role, fatty acid desaturase that introduces a cis double bond at the 5-position in 20-carbon polyunsaturated fatty acids incorporated in a glycerolipid that contain a Delta(8) double bond. The chain is Acyl-lipid (8-3)-desaturase from Thraustochytrium sp.